The sequence spans 575 residues: Proline--tRNA ligase, cytoplasmic (575 aa).

The protein belongs to the class-II aminoacyl-tRNA synthetase family.

It localises to the cytoplasm. The catalysed reaction is tRNA(Pro) + L-proline + ATP = L-prolyl-tRNA(Pro) + AMP + diphosphate. The polypeptide is Proline--tRNA ligase, cytoplasmic (PRS) (Candida albicans (Yeast)).